Reading from the N-terminus, the 234-residue chain is Thymidylate kinase (234 aa).

10-17 (GGEGSGKT) is a binding site for ATP.

Belongs to the thymidylate kinase family.

It carries out the reaction dTMP + ATP = dTDP + ADP. Phosphorylation of dTMP to form dTDP in both de novo and salvage pathways of dTTP synthesis. The chain is Thymidylate kinase from Cyanothece sp. (strain PCC 7425 / ATCC 29141).